A 412-amino-acid chain; its full sequence is BSD domain-containing protein 1 (412 aa).

Positions 146 to 198 constitute a BSD domain; sequence WLAYWDPEHRKAEISELLVTSPSIRALYTKMVPAAVSHSEFWQRYFYKVHQLE. Composition is skewed to basic and acidic residues over residues 208 to 219 and 255 to 271; these read KQRADQSVHSEE and HVEDKSEKMAELNRDHT. Disordered regions lie at residues 208–228 and 255–383; these read KQRADQSVHSEEPQWEEEEED and HVED…EKDF. Low complexity predominate over residues 272–287; that stretch reads SITSPSESSESISPIT. Positions 340-351 are enriched in basic and acidic residues; the sequence is THREDPPSDLRV. Residues 355–374 are compositionally biased toward polar residues; sequence NSDSGKSTPSNNGQKGSSTD.

The protein is BSD domain-containing protein 1 (bsdc1) of Xenopus tropicalis (Western clawed frog).